The following is a 686-amino-acid chain: Probable metal-nicotianamine transporter YSL10 (686 aa).

Helical transmembrane passes span 36-56 (VTLRALAVSALLGAMFSVIVM), 60-80 (LTTGIIPSLNVSAGLLGFFLL), 109-129 (CVVACSGIAFSGGFGSYIFAM), 151-171 (LGWMIGFLFIVSFLGLFSVVP), 212-232 (MLGKFFVMSFSWGFFQWFYTG), 271-291 (LVNISVLLGGVMSWGIMWPLI), 316-336 (VFISISLILGDGLYNFLKVMT), 383-403 (IPNWLALSAYVVIAVVSIATV), 415-435 (VAVSYVVAPVLAFCNAYGCGL), 461-481 (GGIIAGLAACGVMIGIVSTAS), 501-521 (FVSQVIGTAMGCVIAPSVFWL), 556-576 (GSLPKHCLDLCIGFFVAAIAV), 597-617 (MAIPFYLGPYFGIDMCIGSLI), and 639-659 (GLICGDGIWTLPQSVLALAGV).

Belongs to the YSL (TC 2.A.67.2) family.

The protein localises to the membrane. In terms of biological role, may be involved in the transport of nicotianamine-chelated metals. The chain is Probable metal-nicotianamine transporter YSL10 (YSL10) from Oryza sativa subsp. japonica (Rice).